The chain runs to 456 residues: Adenylyltransferase and sulfurtransferase uba4 (456 aa).

Residues glycine 101, aspartate 122, 129 to 133 (SNLHR), lysine 146, and 161 to 162 (DH) each bind ATP. Residues cysteine 210 and cysteine 213 each coordinate Zn(2+). Cysteine 227 serves as the catalytic Glycyl thioester intermediate; for adenylyltransferase activity. The Zn(2+) site is built by cysteine 300 and cysteine 303. The region spanning 350-454 (KEKEHLLIDV…WKEQVDGSWP (105 aa)) is the Rhodanese domain. The active-site Cysteine persulfide intermediate; for sulfurtransferase activity is cysteine 409.

This sequence in the N-terminal section; belongs to the HesA/MoeB/ThiF family. UBA4 subfamily. Zn(2+) is required as a cofactor.

Its subcellular location is the cytoplasm. It localises to the cytosol. The catalysed reaction is [molybdopterin-synthase sulfur-carrier protein]-C-terminal Gly-Gly + ATP + H(+) = [molybdopterin-synthase sulfur-carrier protein]-C-terminal Gly-Gly-AMP + diphosphate. The enzyme catalyses [molybdopterin-synthase sulfur-carrier protein]-C-terminal Gly-Gly-AMP + S-sulfanyl-L-cysteinyl-[cysteine desulfurase] + AH2 = [molybdopterin-synthase sulfur-carrier protein]-C-terminal-Gly-aminoethanethioate + L-cysteinyl-[cysteine desulfurase] + A + AMP + 2 H(+). Its pathway is tRNA modification; 5-methoxycarbonylmethyl-2-thiouridine-tRNA biosynthesis. Functionally, plays a central role in 2-thiolation of mcm(5)S(2)U at tRNA wobble positions of cytosolic tRNA(Lys), tRNA(Glu) and tRNA(Gln). Also essential during biosynthesis of the molybdenum cofactor. Acts by mediating the C-terminal thiocarboxylation of sulfur carriers urm1 and mocs2a. Its N-terminus first activates urm1 and mocs2a as acyl-adenylates (-COAMP), then the persulfide sulfur on the catalytic cysteine is transferred to urm1 and mocs2a to form thiocarboxylation (-COSH) of their C-terminus. The reaction probably involves hydrogen sulfide that is generated from the persulfide intermediate and that acts as a nucleophile towards urm1 and mocs2a. Subsequently, a transient disulfide bond is formed. Does not use thiosulfate as sulfur donor; nfs1 probably acting as a sulfur donor for thiocarboxylation reactions. The chain is Adenylyltransferase and sulfurtransferase uba4 from Sclerotinia sclerotiorum (strain ATCC 18683 / 1980 / Ss-1) (White mold).